Here is a 216-residue protein sequence, read N- to C-terminus: GTP cyclohydrolase 1 2 (216 aa).

This sequence belongs to the GTP cyclohydrolase I family. In terms of assembly, homomer.

The catalysed reaction is GTP + H2O = 7,8-dihydroneopterin 3'-triphosphate + formate + H(+). The protein operates within cofactor biosynthesis; 7,8-dihydroneopterin triphosphate biosynthesis; 7,8-dihydroneopterin triphosphate from GTP: step 1/1. This is GTP cyclohydrolase 1 2 (folE2) from Nostoc sp. (strain PCC 7120 / SAG 25.82 / UTEX 2576).